The following is a 265-amino-acid chain: Glutamate racemase (265 aa).

Substrate-binding positions include 9–10 and 41–42; these read DS and YG. Cys-72 (proton donor/acceptor) is an active-site residue. 73–74 contacts substrate; the sequence is NT. Cys-183 serves as the catalytic Proton donor/acceptor. 184–185 contacts substrate; it reads TH.

Belongs to the aspartate/glutamate racemases family.

The catalysed reaction is L-glutamate = D-glutamate. It functions in the pathway cell wall biogenesis; peptidoglycan biosynthesis. Functionally, provides the (R)-glutamate required for cell wall biosynthesis. The protein is Glutamate racemase of Lysinibacillus sphaericus (strain C3-41).